The following is a 114-amino-acid chain: MSKVLIVAKGMGLKSTPSKLNLVADLIRGKDVSVAMMYLKFCRKKSAGYISKVLKSAVANAQANYNIDLDNLYVKEVLVGKSFSLRRIHARARGKACRVYKHYGNVIIKLFERI.

The protein belongs to the universal ribosomal protein uL22 family. Part of the 50S ribosomal subunit.

In terms of biological role, this protein binds specifically to 23S rRNA; its binding is stimulated by other ribosomal proteins, e.g. L4, L17, and L20. It is important during the early stages of 50S assembly. It makes multiple contacts with different domains of the 23S rRNA in the assembled 50S subunit and ribosome. Its function is as follows. The globular domain of the protein is located near the polypeptide exit tunnel on the outside of the subunit, while an extended beta-hairpin is found that lines the wall of the exit tunnel in the center of the 70S ribosome. The chain is Large ribosomal subunit protein uL22 from Ehrlichia chaffeensis (strain ATCC CRL-10679 / Arkansas).